A 156-amino-acid polypeptide reads, in one-letter code: Arginine repressor (156 aa).

Belongs to the ArgR family.

The protein localises to the cytoplasm. It participates in amino-acid biosynthesis; L-arginine biosynthesis [regulation]. Functionally, regulates arginine biosynthesis genes. This chain is Arginine repressor, found in Escherichia fergusonii (strain ATCC 35469 / DSM 13698 / CCUG 18766 / IAM 14443 / JCM 21226 / LMG 7866 / NBRC 102419 / NCTC 12128 / CDC 0568-73).